Reading from the N-terminus, the 1338-residue chain is Vascular endothelial growth factor receptor 1 (1338 aa).

Residues 1–26 (MVSYWDTGVLLCALLSCLLLTGSSSG) form the signal peptide. The Extracellular portion of the chain corresponds to 27–758 (SKLKDPELSL…QGTSDKSNLE (732 aa)). Ig-like C2-type domains are found at residues 32–123 (PELS…TESA), 151–214 (GREL…VNGH), 230–327 (IDVQ…TSVH), 335–421 (TVKH…LTAT), 428–553 (PQIY…FYIT), 556–654 (PNGF…KEIT), and 661–747 (PYLL…AYLT). Disulfide bonds link Cys-53/Cys-107 and Cys-158/Cys-207. N-linked (GlcNAc...) asparagine glycosylation is found at Asn-100, Asn-164, Asn-196, and Asn-251. Cysteines 252 and 311 form a disulfide. N-linked (GlcNAc...) asparagine glycans are attached at residues Asn-323, Asn-402, Asn-417, Asn-474, Asn-547, Asn-597, Asn-620, Asn-625, and Asn-666. An intrachain disulfide couples Cys-454 to Cys-535. Cys-577 and Cys-636 are joined by a disulfide. Cysteines 682 and 731 form a disulfide. The helical transmembrane segment at 759–780 (LITLTCTCVAATLFWLLLTLFI) threads the bilayer. Topologically, residues 781–1338 (RKMKRSSSEI…SVVLYSTPPI (558 aa)) are cytoplasmic. In terms of domain architecture, Protein kinase spans 827–1158 (LKLGKSLGRG…ELVEKLGDLL (332 aa)). Residues 833–841 (LGRGAFGKV) and Lys-861 contribute to the ATP site. Position 914 is a phosphotyrosine; by autocatalysis (Tyr-914). A compositionally biased stretch (basic and acidic residues) spans 940 to 957 (PKKEKMEPGLEQGKKPRL). The interval 940–982 (PKKEKMEPGLEQGKKPRLDSVTSSESFASSGFQEDKSLSDVEE) is disordered. Polar residues predominate over residues 959–971 (SVTSSESFASSGF). The active-site Proton acceptor is the Asp-1022. Tyr-1053, Tyr-1169, Tyr-1213, Tyr-1242, Tyr-1309, Tyr-1327, and Tyr-1333 each carry phosphotyrosine; by autocatalysis.

Belongs to the protein kinase superfamily. Tyr protein kinase family. CSF-1/PDGF receptor subfamily. In terms of assembly, interacts with VEGFA, VEGFB and PGF. Monomer in the absence of bound VEGFA, VEGFB or PGF. Homodimer in the presence of bound VEGFA, VEGFB and PGF. Can also form a heterodimer with KDR. Interacts (when tyrosine phosphorylated) with CBL, CRK, GRB2, NCK1, PIK3R1, PLCG, PSEN1 and PTPN11. Probably also interacts with PTPRB. Interacts with RACK1. Identified in a complex with CBL and CD2AP. N-glycosylated. In terms of processing, ubiquitinated after VEGFA-mediated autophosphorylation, leading to proteolytic degradation. Post-translationally, autophosphorylated on tyrosine residues upon ligand binding. Autophosphorylation occurs in trans, i.e. one subunit of the dimeric receptor phosphorylates tyrosine residues on the other subunit. Phosphorylation at Tyr-1169 is important for interaction with PLCG. Phosphorylation at Tyr-1213 is important for interaction with PIK3R1, PTPN11, GRB2, and PLCG. Phosphorylation at Tyr-1333 is important for endocytosis and for interaction with CBL, NCK1 and CRK. Is probably dephosphorylated by PTPRB. As to expression, detected in normal lung, but also in placenta, liver, kidney, heart and brain tissues. Specifically expressed in most of the vascular endothelial cells, and also expressed in peripheral blood monocytes. Isoform 2 is strongly expressed in placenta. Isoform 3 is expressed in corneal epithelial cells (at protein level). Isoform 3 is expressed in vascular smooth muscle cells (VSMC).

The protein resides in the cell membrane. It localises to the endosome. Its subcellular location is the secreted. The protein localises to the cytoplasm. The catalysed reaction is L-tyrosyl-[protein] + ATP = O-phospho-L-tyrosyl-[protein] + ADP + H(+). With respect to regulation, present in an inactive conformation in the absence of bound ligand. Binding of VEGFA, VEGFB or PGF leads to dimerization and activation by autophosphorylation on tyrosine residues. Its function is as follows. Tyrosine-protein kinase that acts as a cell-surface receptor for VEGFA, VEGFB and PGF, and plays an essential role in the development of embryonic vasculature, the regulation of angiogenesis, cell survival, cell migration, macrophage function, chemotaxis, and cancer cell invasion. Acts as a positive regulator of postnatal retinal hyaloid vessel regression. May play an essential role as a negative regulator of embryonic angiogenesis by inhibiting excessive proliferation of endothelial cells. Can promote endothelial cell proliferation, survival and angiogenesis in adulthood. Its function in promoting cell proliferation seems to be cell-type specific. Promotes PGF-mediated proliferation of endothelial cells, proliferation of some types of cancer cells, but does not promote proliferation of normal fibroblasts (in vitro). Has very high affinity for VEGFA and relatively low protein kinase activity; may function as a negative regulator of VEGFA signaling by limiting the amount of free VEGFA and preventing its binding to KDR. Modulates KDR signaling by forming heterodimers with KDR. Ligand binding leads to the activation of several signaling cascades. Activation of PLCG leads to the production of the cellular signaling molecules diacylglycerol and inositol 1,4,5-trisphosphate and the activation of protein kinase C. Mediates phosphorylation of PIK3R1, the regulatory subunit of phosphatidylinositol 3-kinase, leading to activation of phosphatidylinositol kinase and the downstream signaling pathway. Mediates activation of MAPK1/ERK2, MAPK3/ERK1 and the MAP kinase signaling pathway, as well as of the AKT1 signaling pathway. Phosphorylates SRC and YES1, and may also phosphorylate CBL. Promotes phosphorylation of AKT1 at 'Ser-473'. Promotes phosphorylation of PTK2/FAK1. Functionally, phosphorylates PLCG. May function as decoy receptor for VEGFA. In terms of biological role, has a truncated kinase domain; it increases phosphorylation of SRC at 'Tyr-418' by unknown means and promotes tumor cell invasion. The chain is Vascular endothelial growth factor receptor 1 (FLT1) from Homo sapiens (Human).